The chain runs to 118 residues: UPF0102 protein Francci3_3586 (118 aa).

It belongs to the UPF0102 family.

This chain is UPF0102 protein Francci3_3586, found in Frankia casuarinae (strain DSM 45818 / CECT 9043 / HFP020203 / CcI3).